The chain runs to 285 residues: Cold sensitive U2 snRNA suppressor 2 (285 aa).

Residues 45-130 form the RRM 1 domain; that stretch reads TSIYISGLPT…KQIRVERAQF (86 aa). The span at 135–149 shows a compositional bias: basic and acidic residues; that stretch reads GDNMHGKENDLKEFN. The interval 135 to 154 is disordered; it reads GDNMHGKENDLKEFNGPEPP. S163 is modified (phosphoserine). One can recognise an RRM 2 domain in the interval 183-265; that stretch reads RTVIFANVFN…QKLLAFISGD (83 aa). Residues 265-285 are disordered; sequence DENTSSTSDKNEDSEVEDDLI. The segment covering 276-285 has biased composition (acidic residues); the sequence is EDSEVEDDLI.

It belongs to the HTATSF1 family. In terms of assembly, interacts with PRP11. Associates with the U2 snRNA.

In terms of biological role, U2 snRNP protein which helps to refold U2 into a structure favorable for its binding to SF3b and SF3a prior to spliceosome assembly. Mediates functional interactions between U2 RNA and PRP5. Enforces ATP dependence during formation of the prespliceosome by brokering an interaction between PRP5 and the U2 snRNP that depends on correct U2 RNA structure. The chain is Cold sensitive U2 snRNA suppressor 2 (CUS2) from Saccharomyces cerevisiae (strain ATCC 204508 / S288c) (Baker's yeast).